The sequence spans 734 residues: Subtilisin-like protease SBT3.2 (734 aa).

An N-terminal signal peptide occupies residues Met-1–Ala-19. Positions Ala-20–Gln-88 are cleaved as a propeptide — activation peptide. In terms of domain architecture, Peptidase S8 spans Thr-92 to Ala-581. N-linked (GlcNAc...) asparagine glycosylation occurs at Asn-108. Catalysis depends on Asp-122, which acts as the Charge relay system. N-linked (GlcNAc...) asparagine glycosylation is present at Asn-143. His-179 serves as the catalytic Charge relay system. N-linked (GlcNAc...) asparagine glycans are attached at residues Asn-326 and Asn-355. Residues Val-361 to Ile-438 form the PA domain. Asn-497 carries N-linked (GlcNAc...) asparagine glycosylation. Ser-512 functions as the Charge relay system in the catalytic mechanism. An N-linked (GlcNAc...) asparagine glycan is attached at Asn-669.

Belongs to the peptidase S8 family.

Its subcellular location is the secreted. The chain is Subtilisin-like protease SBT3.2 from Arabidopsis thaliana (Mouse-ear cress).